Consider the following 87-residue polypeptide: Small ribosomal subunit protein uS15 (87 aa).

This sequence belongs to the universal ribosomal protein uS15 family. Part of the 30S ribosomal subunit. Forms a bridge to the 50S subunit in the 70S ribosome, contacting the 23S rRNA.

Functionally, one of the primary rRNA binding proteins, it binds directly to 16S rRNA where it helps nucleate assembly of the platform of the 30S subunit by binding and bridging several RNA helices of the 16S rRNA. In terms of biological role, forms an intersubunit bridge (bridge B4) with the 23S rRNA of the 50S subunit in the ribosome. This is Small ribosomal subunit protein uS15 from Clostridium botulinum (strain Eklund 17B / Type B).